The following is a 290-amino-acid chain: uncharacterized protein (290 aa).

2 disordered regions span residues 17-91 (QTIS…EKNS) and 220-259 (DKASEPINGEEKEEGEKDGNAEQGKQKEVQDEQEEVQMPN). Residues 40–50 (NITTHLSTGNL) show a composition bias toward polar residues. Positions 66–83 (STKKGKRVSKPGTKKKEK) are enriched in basic residues. Positions 233-249 (EGEKDGNAEQGKQKEVQ) are enriched in basic and acidic residues.

This is an uncharacterized protein from Saccharomyces cerevisiae (strain ATCC 204508 / S288c) (Baker's yeast).